The sequence spans 279 residues: 3-methyl-2-oxobutanoate hydroxymethyltransferase (279 aa).

Mg(2+)-binding residues include aspartate 43 and aspartate 82. 3-methyl-2-oxobutanoate contacts are provided by residues 43 to 44, aspartate 82, and lysine 112; that span reads DS. Position 114 (glutamate 114) interacts with Mg(2+). Catalysis depends on glutamate 181, which acts as the Proton acceptor.

This sequence belongs to the PanB family. Homodecamer; pentamer of dimers. Mg(2+) serves as cofactor.

The protein localises to the cytoplasm. It carries out the reaction 3-methyl-2-oxobutanoate + (6R)-5,10-methylene-5,6,7,8-tetrahydrofolate + H2O = 2-dehydropantoate + (6S)-5,6,7,8-tetrahydrofolate. The protein operates within cofactor biosynthesis; (R)-pantothenate biosynthesis; (R)-pantoate from 3-methyl-2-oxobutanoate: step 1/2. In terms of biological role, catalyzes the reversible reaction in which hydroxymethyl group from 5,10-methylenetetrahydrofolate is transferred onto alpha-ketoisovalerate to form ketopantoate. The polypeptide is 3-methyl-2-oxobutanoate hydroxymethyltransferase (Geobacillus thermodenitrificans (strain NG80-2)).